A 147-amino-acid chain; its full sequence is Hemoglobin subunit beta (147 aa).

The Globin domain maps to 3 to 147; it reads HWTPEEKQYI…VAHALALGYH (145 aa). Histidine 64 and histidine 93 together coordinate heme b.

The protein belongs to the globin family. As to quaternary structure, heterotetramer of two alpha-D chains and two beta chains. In terms of tissue distribution, red blood cells.

Its function is as follows. Involved in oxygen transport from the lung to the various peripheral tissues. This is Hemoglobin subunit beta (HBB) from Chelonoidis niger (Galapagos giant tortoise).